Reading from the N-terminus, the 101-residue chain is Small ribosomal subunit protein uS14 (101 aa).

This sequence belongs to the universal ribosomal protein uS14 family. Part of the 30S ribosomal subunit. Contacts proteins S3 and S10.

Its function is as follows. Binds 16S rRNA, required for the assembly of 30S particles and may also be responsible for determining the conformation of the 16S rRNA at the A site. The sequence is that of Small ribosomal subunit protein uS14 from Neisseria gonorrhoeae (strain ATCC 700825 / FA 1090).